The following is a 231-amino-acid chain: MESTMSPYFGIVVSLAAFGIGTFLFKKTKGFFLFTPLFVAMVLGIAFLKIGGFSYADYNNGGEIIKFFLEPATIAFAIPLYKQRDKLKKYWWQIMASIIAGSICSVTIVYLLAKGIHLDSAVMKSMLPQAATTAIALPLSKGIGGISDITAFAVIFNAVIVYALGALFLKVFKVKNPISKGLALGTSGHALGVAVGIEMGEVEAAMASIAVVVVGVVTVLVIPVFVQLIGG.

The next 5 membrane-spanning stretches (helical) occupy residues 7-24, 34-56, 91-113, 149-171, and 207-229; these read PYFG…GTFL, FTPL…FSYA, WWQI…YLLA, ITAF…FLKV, and ASIA…VQLI.

It belongs to the CidB/LrgB family. LrgB subfamily.

The protein resides in the cell membrane. Its function is as follows. Inhibits the expression or activity of extracellular murein hydrolases by interacting, possibly with LrgA, with the holin-like protein CidA. The LrgAB and CidA proteins may affect the proton motive force of the membrane. May be involved in programmed cell death (PCD), possibly triggering PCD in response to antibiotics and environmental stresses. The protein is Antiholin-like protein LrgB of Bacillus subtilis (strain 168).